A 355-amino-acid polypeptide reads, in one-letter code: MFPIDIRPDKLTQEMLDYSRKLGQGMENLLNAEAIDTGVSPKQAVYSEDKLVLYRYDRPEGAPEAQPVPLLIVYALVNRPYMTDIQEDRSTIKGLLATGQDVYLIDWGYPDQADRALTLDDYINGYIDRCVDYLREAHGVDKVNLLGICQGGAFSLMYSALHPDKVRNLVTMVTPVDFKTPDNLLSAWVQNVDIDLAVDTMGNIPGELLNWTFLSLKPFSLTGQKYVNMVDLLDDPDKVKNFLRMEKWIFDSPDQAGETFRQFIKDFYQNNGFLNGGVVLGGQEVDLKDITCPVLNIFALQDHLVPPDASRALKGLTSSPDYTELAFPGGHIGIYVSGKAQKEVTPAIGKWLNER.

One can recognise an AB hydrolase-1 domain in the interval 69–334 (PLLIVYALVN…LAFPGGHIGI (266 aa)). Residue C149 is part of the active site.

Belongs to the PHA/PHB synthase family. Type III PhaC subfamily. As to quaternary structure, a large complex of PhaC and PhaE; the ratio of the subunits has been estimated to be from 1:1 to 4:1, with more PhaE than PhaC.

The protein localises to the cytoplasm. It catalyses the reaction (3R)-3-hydroxybutanoyl-CoA + [(3R)-hydroxybutanoate](n) = [(3R)-hydroxybutanoate](n+1) + CoA. It participates in biopolymer metabolism; poly-(R)-3-hydroxybutanoate biosynthesis. Functionally, polymerizes D(-)-3-hydroxybutyryl-CoA to create polyhydroxybutyrate (PHB) which consists of thousands of hydroxybutyrate molecules linked end to end. This subunit has catalytic activity that is enhanced 100-fold by PhaE, the non-catalytic subunit. The polypeptide is Poly(3-hydroxyalkanoate) polymerase subunit PhaC (Allochromatium vinosum (strain ATCC 17899 / DSM 180 / NBRC 103801 / NCIMB 10441 / D) (Chromatium vinosum)).